The sequence spans 230 residues: Probable methylthioribulose-1-phosphate dehydratase (230 aa).

Cys-87 lines the substrate pocket. Zn(2+) contacts are provided by His-105 and His-107. Glu-129 serves as the catalytic Proton donor/acceptor. Residue His-185 participates in Zn(2+) binding.

Belongs to the aldolase class II family. MtnB subfamily. Zn(2+) is required as a cofactor.

The protein resides in the cytoplasm. It carries out the reaction 5-(methylsulfanyl)-D-ribulose 1-phosphate = 5-methylsulfanyl-2,3-dioxopentyl phosphate + H2O. The protein operates within amino-acid biosynthesis; L-methionine biosynthesis via salvage pathway; L-methionine from S-methyl-5-thio-alpha-D-ribose 1-phosphate: step 2/6. In terms of biological role, catalyzes the dehydration of methylthioribulose-1-phosphate (MTRu-1-P) into 2,3-diketo-5-methylthiopentyl-1-phosphate (DK-MTP-1-P). The protein is Probable methylthioribulose-1-phosphate dehydratase of Drosophila grimshawi (Hawaiian fruit fly).